The following is a 420-amino-acid chain: Dihydrolipoyllysine-residue succinyltransferase component of 2-oxoglutarate dehydrogenase complex (420 aa).

In terms of domain architecture, Lipoyl-binding spans 1–76; it reads MAEVKVPELA…EVGQAVAVVG (76 aa). Position 42 is an N6-lipoyllysine (Lys-42). The segment at 75 to 199 is disordered; it reads VGEGQVNTSN…IREKMSRRKK (125 aa). A compositionally biased stretch (polar residues) spans 81–90; that stretch reads NTSNDSSNES. The span at 91–102 shows a compositional bias: basic and acidic residues; it reads SQKDEAKEKETP. The segment covering 103-127 has biased composition (polar residues); it reads KQSNPNSSESENTQDNSQQRINATP. Residues 124 to 160 form the Peripheral subunit-binding (PSBD) domain; sequence NATPSARRHARKNGVDLSEVSGKGNDVLRKDDVENSQ. Residues 149–158 are compositionally biased toward basic and acidic residues; the sequence is DVLRKDDVEN. The span at 159–174 shows a compositional bias: low complexity; the sequence is SQKSSSQTAKSESKSQ. The span at 175 to 186 shows a compositional bias: polar residues; that stretch reads NSGSKQTNNNPS. Catalysis depends on residues His-391 and Asp-395.

Belongs to the 2-oxoacid dehydrogenase family. As to quaternary structure, forms a 24-polypeptide structural core with octahedral symmetry. Part of the 2-oxoglutarate dehydrogenase (OGDH) complex composed of E1 (2-oxoglutarate dehydrogenase), E2 (dihydrolipoamide succinyltransferase) and E3 (dihydrolipoamide dehydrogenase); the complex contains multiple copies of the three enzymatic components (E1, E2 and E3). Requires (R)-lipoate as cofactor.

The enzyme catalyses N(6)-[(R)-dihydrolipoyl]-L-lysyl-[protein] + succinyl-CoA = N(6)-[(R)-S(8)-succinyldihydrolipoyl]-L-lysyl-[protein] + CoA. The protein operates within amino-acid degradation; L-lysine degradation via saccharopine pathway; glutaryl-CoA from L-lysine: step 6/6. Its function is as follows. E2 component of the 2-oxoglutarate dehydrogenase (OGDH) complex which catalyzes the second step in the conversion of 2-oxoglutarate to succinyl-CoA and CO(2). The protein is Dihydrolipoyllysine-residue succinyltransferase component of 2-oxoglutarate dehydrogenase complex (odhB) of Staphylococcus epidermidis (strain ATCC 35984 / DSM 28319 / BCRC 17069 / CCUG 31568 / BM 3577 / RP62A).